A 311-amino-acid chain; its full sequence is Methionyl-tRNA formyltransferase (311 aa).

(6S)-5,6,7,8-tetrahydrofolate is bound at residue 110 to 113 (SLLP).

It belongs to the Fmt family.

The catalysed reaction is L-methionyl-tRNA(fMet) + (6R)-10-formyltetrahydrofolate = N-formyl-L-methionyl-tRNA(fMet) + (6S)-5,6,7,8-tetrahydrofolate + H(+). Its function is as follows. Attaches a formyl group to the free amino group of methionyl-tRNA(fMet). The formyl group appears to play a dual role in the initiator identity of N-formylmethionyl-tRNA by promoting its recognition by IF2 and preventing the misappropriation of this tRNA by the elongation apparatus. The chain is Methionyl-tRNA formyltransferase from Streptococcus equi subsp. zooepidemicus (strain H70).